We begin with the raw amino-acid sequence, 329 residues long: Epoxide hydrolase (329 aa).

The AB hydrolase-1 domain maps to 35–308 (PAVLFCHGFP…DNVGHWVQHE (274 aa)). Residue Asp111 is the Nucleophile of the active site. Catalysis depends on Tyr242, which acts as the Proton donor. The active-site Proton acceptor is the His303.

Belongs to the AB hydrolase superfamily. Epoxide hydrolase family. In terms of assembly, homodimer.

It carries out the reaction an epoxide + H2O = an ethanediol. It catalyses the reaction (R)-styrene oxide + H2O = (R)-styrene glycol. The enzyme catalyses (S)-styrene oxide + H2O = (S)-styrene glycol. The catalysed reaction is 3,4-epoxy-1-cyclohexene + H2O = cyclohex-3-ene-1,2-diol. In terms of biological role, catalyzes the hydrolysis of various epoxides into diols. In vitro, shows the strongest activity toward aromatic and cyclic aliphatic epoxide compounds, since it shows strong activity toward (R)-styrene oxide, (S)-styrene oxide, and 3,4-epoxy-1-cyclohexene, but very weak activity toward (R)-epichlorohydrin, (S)-epichlorohydrin, and 1,2-epoxy-9-decene. This Caballeronia sordidicola (Burkholderia sordidicola) protein is Epoxide hydrolase.